A 516-amino-acid polypeptide reads, in one-letter code: Protein BTN1 (516 aa).

Helical transmembrane passes span L24–S44, G57–L77, V88–L108, L112–L132, L146–L166, G169–T189, P371–F391, and S409–V429.

It belongs to the battenin family.

It localises to the vacuole membrane. In terms of biological role, involved in vacuolar transport and vacuole pH homeostasis. Also required for cytokinesis. In Cryptococcus neoformans var. neoformans serotype D (strain JEC21 / ATCC MYA-565) (Filobasidiella neoformans), this protein is Protein BTN1 (BTN1).